Consider the following 678-residue polypeptide: UvrABC system protein B (678 aa).

Positions 26-185 (EGLEDGEAFQ…LTTMQYTRND (160 aa)) constitute a Helicase ATP-binding domain. 39 to 46 (GVTGSGKT) contacts ATP. The Beta-hairpin signature appears at 92–115 (YYDYYQPEAYVPASDTYIAKDSSV). A Helicase C-terminal domain is found at 430–596 (QVDDLLGEIR…KLNKKITDIL (167 aa)). The disordered stretch occupies residues 597–630 (EDSPYAPKPGASAAKLKAAEADGEYSPQEMQRMT). Residues 635 to 670 (ASEIKRMEKQMYQAAKDLDFELAAKLRDDLKRLKSS) form the UVR domain.

The protein belongs to the UvrB family. As to quaternary structure, forms a heterotetramer with UvrA during the search for lesions. Interacts with UvrC in an incision complex.

The protein resides in the cytoplasm. Functionally, the UvrABC repair system catalyzes the recognition and processing of DNA lesions. A damage recognition complex composed of 2 UvrA and 2 UvrB subunits scans DNA for abnormalities. Upon binding of the UvrA(2)B(2) complex to a putative damaged site, the DNA wraps around one UvrB monomer. DNA wrap is dependent on ATP binding by UvrB and probably causes local melting of the DNA helix, facilitating insertion of UvrB beta-hairpin between the DNA strands. Then UvrB probes one DNA strand for the presence of a lesion. If a lesion is found the UvrA subunits dissociate and the UvrB-DNA preincision complex is formed. This complex is subsequently bound by UvrC and the second UvrB is released. If no lesion is found, the DNA wraps around the other UvrB subunit that will check the other stand for damage. The protein is UvrABC system protein B of Hydrogenovibrio crunogenus (strain DSM 25203 / XCL-2) (Thiomicrospira crunogena).